Reading from the N-terminus, the 205-residue chain is Molybdenum cofactor guanylyltransferase (205 aa).

GTP contacts are provided by residues L14–G16, K27, D77, and D107. D107 contacts Mg(2+).

Belongs to the MobA family. Monomer. Mg(2+) serves as cofactor.

It localises to the cytoplasm. The enzyme catalyses Mo-molybdopterin + GTP + H(+) = Mo-molybdopterin guanine dinucleotide + diphosphate. Its function is as follows. Transfers a GMP moiety from GTP to Mo-molybdopterin (Mo-MPT) cofactor (Moco or molybdenum cofactor) to form Mo-molybdopterin guanine dinucleotide (Mo-MGD) cofactor. The sequence is that of Molybdenum cofactor guanylyltransferase from Burkholderia lata (strain ATCC 17760 / DSM 23089 / LMG 22485 / NCIMB 9086 / R18194 / 383).